Reading from the N-terminus, the 509-residue chain is Steroid 17-alpha-hydroxylase/17,20 lyase (509 aa).

C440 contributes to the heme binding site.

It belongs to the cytochrome P450 family. Heme serves as cofactor.

It is found in the endoplasmic reticulum membrane. The protein localises to the microsome membrane. The enzyme catalyses a C21-steroid + reduced [NADPH--hemoprotein reductase] + O2 = a 17alpha-hydroxy-C21-steroid + oxidized [NADPH--hemoprotein reductase] + H2O + H(+). It carries out the reaction progesterone + reduced [NADPH--hemoprotein reductase] + O2 = 17alpha-hydroxyprogesterone + oxidized [NADPH--hemoprotein reductase] + H2O + H(+). It catalyses the reaction pregnenolone + reduced [NADPH--hemoprotein reductase] + O2 = 17alpha-hydroxypregnenolone + oxidized [NADPH--hemoprotein reductase] + H2O + H(+). The catalysed reaction is 17alpha-hydroxyprogesterone + reduced [NADPH--hemoprotein reductase] + O2 = androst-4-ene-3,17-dione + acetate + oxidized [NADPH--hemoprotein reductase] + H2O + 2 H(+). The enzyme catalyses 17alpha-hydroxyprogesterone + reduced [NADPH--hemoprotein reductase] + O2 = 16alpha,17alpha-dihydroxyprogesterone + oxidized [NADPH--hemoprotein reductase] + H2O + H(+). It carries out the reaction 16alpha,17alpha-dihydroxyprogesterone + reduced [NADPH--hemoprotein reductase] + O2 = 6beta,16alpha,17alpha-trihydroxyprogesterone + oxidized [NADPH--hemoprotein reductase] + H2O + H(+). It catalyses the reaction 17alpha-hydroxypregnenolone + reduced [NADPH--hemoprotein reductase] + O2 = 3beta-hydroxyandrost-5-en-17-one + acetate + oxidized [NADPH--hemoprotein reductase] + H2O + 2 H(+). The catalysed reaction is 16alpha,17alpha-dihydroxypregnenolone + reduced [NADPH--hemoprotein reductase] + O2 = 3beta,16alpha-dihydroxy-androst-5-en-17-one + acetate + oxidized [NADPH--hemoprotein reductase] + H2O + 2 H(+). The enzyme catalyses 3beta-hydroxyandrost-5-en-17-one + reduced [NADPH--hemoprotein reductase] + O2 = 3beta,16alpha-dihydroxy-androst-5-en-17-one + oxidized [NADPH--hemoprotein reductase] + H2O + H(+). It carries out the reaction androst-4-ene-3,17-dione + reduced [NADPH--hemoprotein reductase] + O2 = 16alpha-hydroxyandrost-4-ene-3,17-dione + oxidized [NADPH--hemoprotein reductase] + H2O + H(+). The protein operates within steroid hormone biosynthesis. It participates in steroid biosynthesis; glucocorticoid biosynthesis. Its activity is regulated as follows. Regulated predominantly by intracellular cAMP levels. The 17,20-lyase activity is stimulated by cytochrome b5, which acts as an allosteric effector increasing the Vmax of the lyase activity. In terms of biological role, a cytochrome P450 monooxygenase involved in corticoid and androgen biosynthesis. Catalyzes 17-alpha hydroxylation of C21 steroids, which is common for both pathways. A second oxidative step, required only for androgen synthesis, involves an acyl-carbon cleavage. The 17-alpha hydroxy intermediates, as part of adrenal glucocorticoids biosynthesis pathway, are precursors of cortisol. Hydroxylates steroid hormones, pregnenolone and progesterone to form 17-alpha hydroxy metabolites, followed by the cleavage of the C17-C20 bond to form C19 steroids, dehydroepiandrosterone (DHEA) and androstenedione. Has 16-alpha hydroxylase activity. Catalyzes 16-alpha hydroxylation of 17-alpha hydroxy pregnenolone, followed by the cleavage of the C17-C20 bond to form 16-alpha-hydroxy DHEA. Also 16-alpha hydroxylates androgens, relevant for estriol synthesis. Mechanistically, uses molecular oxygen inserting one oxygen atom into a substrate, and reducing the second into a water molecule, with two electrons provided by NADPH via cytochrome P450 reductase (CPR; NADPH-ferrihemoprotein reductase). This is Steroid 17-alpha-hydroxylase/17,20 lyase (Cyp17a1) from Peromyscus leucopus (White-footed mouse).